An 84-amino-acid polypeptide reads, in one-letter code: Tetrahydromethanopterin S-methyltransferase subunit G (84 aa).

Residues 50–70 (IGILYGLVIGIILSYILPALI) form a helical membrane-spanning segment.

Belongs to the MtrG family. As to quaternary structure, the complex is composed of 8 subunits; MtrA, MtrB, MtrC, MtrD, MtrE, MtrF, MtrG and MtrH.

The protein localises to the cell membrane. The enzyme catalyses 5-methyl-5,6,7,8-tetrahydromethanopterin + coenzyme M + 2 Na(+)(in) = 5,6,7,8-tetrahydromethanopterin + methyl-coenzyme M + 2 Na(+)(out). It functions in the pathway one-carbon metabolism; methanogenesis from CO(2); methyl-coenzyme M from 5,10-methylene-5,6,7,8-tetrahydromethanopterin: step 2/2. In terms of biological role, part of a complex that catalyzes the formation of methyl-coenzyme M and tetrahydromethanopterin from coenzyme M and methyl-tetrahydromethanopterin. This is an energy-conserving, sodium-ion translocating step. The chain is Tetrahydromethanopterin S-methyltransferase subunit G from Methanocaldococcus jannaschii (strain ATCC 43067 / DSM 2661 / JAL-1 / JCM 10045 / NBRC 100440) (Methanococcus jannaschii).